A 339-amino-acid chain; its full sequence is Bifunctional phosphoglucose/phosphomannose isomerase (339 aa).

Residues 22–164 form the SIS domain; it reads ISVNVKAEDI…IEPVDDQIEE (143 aa). The D-fructose 6-phosphate site is built by glycine 41, serine 42, serine 83, serine 85, threonine 88, and arginine 135. Catalysis depends on glutamate 221, which acts as the Proton acceptor. 2 residues coordinate D-fructose 6-phosphate: histidine 237 and lysine 331. Catalysis depends on histidine 237, which acts as the Proton donor. Residue lysine 331 is the Proton acceptor of the active site.

Belongs to the PGI/PMI family. In terms of assembly, homodimer.

It catalyses the reaction alpha-D-glucose 6-phosphate = beta-D-fructose 6-phosphate. The enzyme catalyses D-mannose 6-phosphate = D-fructose 6-phosphate. In terms of biological role, dual specificity isomerase that catalyzes the isomerization of both glucose-6-phosphate and mannose-6-phosphate to fructose-6-phosphate. This Caldicellulosiruptor bescii (strain ATCC BAA-1888 / DSM 6725 / KCTC 15123 / Z-1320) (Anaerocellum thermophilum) protein is Bifunctional phosphoglucose/phosphomannose isomerase.